Consider the following 385-residue polypeptide: 1-deoxy-D-xylulose 5-phosphate reductoisomerase (385 aa).

6 residues coordinate NADPH: Thr10, Gly11, Ser12, Ile13, Lys37, and Asn124. Lys125 is a 1-deoxy-D-xylulose 5-phosphate binding site. Glu126 is an NADPH binding site. Asp150 lines the Mn(2+) pocket. 4 residues coordinate 1-deoxy-D-xylulose 5-phosphate: Ser151, Glu152, Ser176, and His199. Glu152 contacts Mn(2+). Position 205 (Gly205) interacts with NADPH. Residues Ser212, Asn217, Lys218, and Glu221 each contribute to the 1-deoxy-D-xylulose 5-phosphate site. Glu221 provides a ligand contact to Mn(2+).

It belongs to the DXR family. Mg(2+) serves as cofactor. It depends on Mn(2+) as a cofactor.

It carries out the reaction 2-C-methyl-D-erythritol 4-phosphate + NADP(+) = 1-deoxy-D-xylulose 5-phosphate + NADPH + H(+). Its pathway is isoprenoid biosynthesis; isopentenyl diphosphate biosynthesis via DXP pathway; isopentenyl diphosphate from 1-deoxy-D-xylulose 5-phosphate: step 1/6. In terms of biological role, catalyzes the NADPH-dependent rearrangement and reduction of 1-deoxy-D-xylulose-5-phosphate (DXP) to 2-C-methyl-D-erythritol 4-phosphate (MEP). The sequence is that of 1-deoxy-D-xylulose 5-phosphate reductoisomerase from Clostridium novyi (strain NT).